The primary structure comprises 194 residues: CASP-like protein 4D1 (194 aa).

Topologically, residues 1-10 (MASRTVLLPS) are cytoplasmic. A helical transmembrane segment spans residues 11–31 (AVLILRLLSLGLLAASLALIA). Residues 32–55 (ADKLNVDSDPPQRYTFRDVYAYRY) lie on the Extracellular side of the membrane. A helical membrane pass occupies residues 56 to 76 (VLAVAVIGCAYTLLQLPLAAV). Residues 77–94 (SIIASGNNKRGIGAGGGS) lie on the Cytoplasmic side of the membrane. A helical transmembrane segment spans residues 95–115 (VAVALLVLVLLADVVFALLLA). Residues 116–161 (TGAAAGFAFTYDVKRYLDGQFDDDSIGTPEVDKLHRDMDKFFDLAY) are Extracellular-facing. A helical membrane pass occupies residues 162–182 (AAAGLMLAAAACMALVIMLSV). At 183–194 (YSLARQVRSDYI) the chain is on the cytoplasmic side.

It belongs to the Casparian strip membrane proteins (CASP) family. Homodimer and heterodimers.

The protein resides in the cell membrane. In Sorghum bicolor (Sorghum), this protein is CASP-like protein 4D1.